The sequence spans 439 residues: Acyl transferase 7 (439 aa).

Residues methionine 1–proline 25 are disordered. Residues histidine 176 and aspartate 383 each act as proton acceptor in the active site.

Belongs to the plant acyltransferase family.

In terms of biological role, involved in the incorporation of ferulate into the cell wall. May act as arabinoxylan feruloyl transferase. In Oryza sativa subsp. japonica (Rice), this protein is Acyl transferase 7.